The sequence spans 358 residues: NADH-quinone oxidoreductase subunit H (358 aa).

8 helical membrane-spanning segments follow: residues 30-50 (IAVG…LIYM), 96-116 (FLYN…FACI), 129-149 (VGVF…LLAG), 168-188 (IISY…LMGT), 201-221 (GWFI…YLIA), 265-285 (FIVA…LHII), 297-317 (IPGF…LMWI), and 336-356 (YLVP…AFGF).

The protein belongs to the complex I subunit 1 family. In terms of assembly, NDH-1 is composed of 14 different subunits. Subunits NuoA, H, J, K, L, M, N constitute the membrane sector of the complex.

It is found in the cell inner membrane. The enzyme catalyses a quinone + NADH + 5 H(+)(in) = a quinol + NAD(+) + 4 H(+)(out). Its function is as follows. NDH-1 shuttles electrons from NADH, via FMN and iron-sulfur (Fe-S) centers, to quinones in the respiratory chain. The immediate electron acceptor for the enzyme in this species is believed to be ubiquinone. Couples the redox reaction to proton translocation (for every two electrons transferred, four hydrogen ions are translocated across the cytoplasmic membrane), and thus conserves the redox energy in a proton gradient. This subunit may bind ubiquinone. The polypeptide is NADH-quinone oxidoreductase subunit H (Bacteroides thetaiotaomicron (strain ATCC 29148 / DSM 2079 / JCM 5827 / CCUG 10774 / NCTC 10582 / VPI-5482 / E50)).